The chain runs to 348 residues: Anthranilate phosphoribosyltransferase (348 aa).

5-phospho-alpha-D-ribose 1-diphosphate-binding positions include Gly89, 92-93, Thr97, 99-102, 117-125, and Ser129; these read GD, NIST, and KHGNRSASS. Residue Gly89 coordinates anthranilate. Ser101 contributes to the Mg(2+) binding site. Asn120 serves as a coordination point for anthranilate. Arg175 serves as a coordination point for anthranilate. Asp234 and Glu235 together coordinate Mg(2+).

This sequence belongs to the anthranilate phosphoribosyltransferase family. As to quaternary structure, homodimer. Mg(2+) is required as a cofactor.

The enzyme catalyses N-(5-phospho-beta-D-ribosyl)anthranilate + diphosphate = 5-phospho-alpha-D-ribose 1-diphosphate + anthranilate. Its pathway is amino-acid biosynthesis; L-tryptophan biosynthesis; L-tryptophan from chorismate: step 2/5. Functionally, catalyzes the transfer of the phosphoribosyl group of 5-phosphorylribose-1-pyrophosphate (PRPP) to anthranilate to yield N-(5'-phosphoribosyl)-anthranilate (PRA). In Synechocystis sp. (strain ATCC 27184 / PCC 6803 / Kazusa), this protein is Anthranilate phosphoribosyltransferase.